The primary structure comprises 377 residues: MNTPSQAQVRRAIAEAQTIVVKVGSSSLTEPSGHLDPQRLNALVAAIARVRLMGGRVVLVSSGAIAAGFGTLGFDKRPTDVADQQACAAVGQGLLMAQYEAAFARYGLRVGQILITVSDTIAPQQYRNVRRTLDRLLDLGAVPIINENDSLASNEIRFGDNDRLSALIANIVVADALVLLTDVDALYTAPPSEPGSKRISYVPNVEDALAKVQVGGTGSNVGTGGMVTKMEAARVAAVSGIPAVLTCASNAGPAMMGDPVGTAFAPINDRGSSRRLWIGFASHPQGTLVADSGAAKAVRGGAASLLAAGVVEVKGDFAAGDAVWVDDEQGNHLAKGLVGFDSEEIPQMLGRNTAQLKRFLGEEYAHPLVHRDNLVLV.

Position 22 (Lys-22) interacts with ATP. 3 residues coordinate substrate: Ser-62, Asp-149, and Asn-161. ATP-binding positions include 181-182 (TD) and 223-229 (TGGMVTK). The region spanning 285 to 359 (QGTLVADSGA…GRNTAQLKRF (75 aa)) is the PUA domain.

Belongs to the glutamate 5-kinase family.

It is found in the cytoplasm. The catalysed reaction is L-glutamate + ATP = L-glutamyl 5-phosphate + ADP. It participates in amino-acid biosynthesis; L-proline biosynthesis; L-glutamate 5-semialdehyde from L-glutamate: step 1/2. Catalyzes the transfer of a phosphate group to glutamate to form L-glutamate 5-phosphate. The polypeptide is Glutamate 5-kinase (Bifidobacterium adolescentis (strain ATCC 15703 / DSM 20083 / NCTC 11814 / E194a)).